Consider the following 550-residue polypeptide: Alkaline phosphatase PhoV (550 aa).

The first 20 residues, 1–20, serve as a signal peptide directing secretion; it reads MKIKLLCISLAVLFCSSANA. Zn(2+) is bound by residues Asp-48 and Thr-89. The active-site Phosphothreonine intermediate is Thr-89. Residues Asn-110 and 171 to 173 contribute to the substrate site; that span reads KDR. Positions 313, 317, 360, 361, and 491 each coordinate Zn(2+).

The cofactor is Zn(2+).

The protein localises to the cell inner membrane. The catalysed reaction is a phosphate monoester + H2O = an alcohol + phosphate. Subject to competitive inhibition by phosphate. Inhibited by manganese. Magnesium mildly increases enzyme activity when the zinc concentration is suboptimal. Optimal activity is dependent on the presence of 0.01-2% Triton X-100. Triton X-100 at a concentration of 0.05% increases the activity about fivefold relative to that in its absence. The enzyme is even active in Triton X-100 concentrations up to 80%. 50% inhibition by 4 mM EDTA and 50% inhibition by 48 mM sodium citrate. Its function is as follows. Alkaline phosphatase with broad substrate specificity. This chain is Alkaline phosphatase PhoV, found in Synechococcus elongatus (strain ATCC 33912 / PCC 7942 / FACHB-805) (Anacystis nidulans R2).